The chain runs to 490 residues: Membrane-bound lytic murein transglycosylase F (490 aa).

Positions Met1–Ala32 are cleaved as a signal peptide. The non-LT domain stretch occupies residues Pro33 to Val269. Residues Asp270–Leu490 form an LT domain region. Residue Glu316 is part of the active site. Residues Ala467–Leu490 form a disordered region.

The protein in the N-terminal section; belongs to the bacterial solute-binding protein 3 family. It in the C-terminal section; belongs to the transglycosylase Slt family.

The protein localises to the cell outer membrane. The enzyme catalyses Exolytic cleavage of the (1-&gt;4)-beta-glycosidic linkage between N-acetylmuramic acid (MurNAc) and N-acetylglucosamine (GlcNAc) residues in peptidoglycan, from either the reducing or the non-reducing ends of the peptidoglycan chains, with concomitant formation of a 1,6-anhydrobond in the MurNAc residue.. In terms of biological role, murein-degrading enzyme that degrades murein glycan strands and insoluble, high-molecular weight murein sacculi, with the concomitant formation of a 1,6-anhydromuramoyl product. Lytic transglycosylases (LTs) play an integral role in the metabolism of the peptidoglycan (PG) sacculus. Their lytic action creates space within the PG sacculus to allow for its expansion as well as for the insertion of various structures such as secretion systems and flagella. The chain is Membrane-bound lytic murein transglycosylase F from Pseudomonas paraeruginosa (strain DSM 24068 / PA7) (Pseudomonas aeruginosa (strain PA7)).